Reading from the N-terminus, the 237-residue chain is Probable transcriptional regulatory protein PSHAa1370 (237 aa).

This sequence belongs to the TACO1 family.

Its subcellular location is the cytoplasm. This Pseudoalteromonas translucida (strain TAC 125) protein is Probable transcriptional regulatory protein PSHAa1370.